We begin with the raw amino-acid sequence, 212 residues long: Adenylate kinase (212 aa).

Residue 10-15 (GAGKGT) coordinates ATP. The interval 30–59 (STGDMFRAAMVNQTEMGVLAKSYIDKGELV) is NMP. Residues Thr31, Arg36, 57–59 (ELV), 86–89 (GYPR), and Gln93 contribute to the AMP site. Residues 127-159 (GRIIHRVTGETFHKVFNPPVDYKEEDYYQREDD) are LID. ATP-binding positions include Arg128 and 137 to 138 (TF). The AMP site is built by Arg156 and Arg167. Residue Gln195 participates in ATP binding.

This sequence belongs to the adenylate kinase family. As to quaternary structure, monomer.

Its subcellular location is the cytoplasm. It carries out the reaction AMP + ATP = 2 ADP. It functions in the pathway purine metabolism; AMP biosynthesis via salvage pathway; AMP from ADP: step 1/1. Functionally, catalyzes the reversible transfer of the terminal phosphate group between ATP and AMP. Plays an important role in cellular energy homeostasis and in adenine nucleotide metabolism. This is Adenylate kinase from Streptococcus pneumoniae (strain 70585).